The following is a 457-amino-acid chain: MPDLPSAFLPLLLLSKFVTPVTFRHHRYDDLVRTLYKVHNQCPDITRLYNIGRSVKGRYLYVLEFSDYPGTHEPLEPEVKYVGNMHGNEVLGRELLLQLSEFLCEEFRNRNQRILRLIQDTRIHILPSMNPDGYEVAAAQGPNTSGYLVGRNNANGVDLNRNFPDLNTYFYYNSKYGGPNHHLPLPDNWKSQVEPETRAVIQWIRSLNFVLSANMHGGAVVANYPYDKSLEHRFRSPHRTSNSPTPDDELFQTLAKVYSYAHGWMHQGWNCGDYFPDGITNGASWYSLSKGMQDFNYLHTNCFEITLELSCNKFPRQEELQREWLGNREALIQFLEQVHQGIKGMVLDENYNNLTGAVISVTGINHDVTSGEHGDYFRLLLPGTYSVTAKASGYEPKTVTVTVGPAGPTLVDFQLKRSTTQVHPVQKAPGRGQGSRAKQPRTSRKKDQAAKRHRGPA.

The first 23 residues, 1-23, serve as a signal peptide directing secretion; sequence MPDLPSAFLPLLLLSKFVTPVTF. One can recognise a Peptidase M14 domain in the interval 24–338; sequence RHHRYDDLVR…EALIQFLEQV (315 aa). An intrachain disulfide couples Cys-42 to Cys-104. Zn(2+) contacts are provided by His-86, Glu-89, and His-216. A disulfide bridge connects residues Cys-271 and Cys-311. Glu-308 serves as the catalytic Proton donor/acceptor. Residues Thr-400, Thr-402, and Thr-409 are each glycosylated (O-linked (GalNAc...) threonine). The disordered stretch occupies residues 418-457; the sequence is STTQVHPVQKAPGRGQGSRAKQPRTSRKKDQAAKRHRGPA.

Belongs to the peptidase M14 family. Tetramer of two catalytic chains and two glycosylated inactive chains. Requires Zn(2+) as cofactor. In terms of tissue distribution, plasma. Expressed in liver.

It localises to the secreted. Its subcellular location is the extracellular space. It catalyses the reaction Release of a C-terminal basic amino acid, preferentially lysine.. In terms of biological role, protects the body from potent vasoactive and inflammatory peptides containing C-terminal Arg or Lys (such as kinins or anaphylatoxins) which are released into the circulation. The chain is Carboxypeptidase N catalytic chain (Cpn1) from Rattus norvegicus (Rat).